A 468-amino-acid polypeptide reads, in one-letter code: ATP synthase subunit beta (468 aa).

Position 155–162 (155–162 (GGAGVGKT)) interacts with ATP.

It belongs to the ATPase alpha/beta chains family. As to quaternary structure, F-type ATPases have 2 components, CF(1) - the catalytic core - and CF(0) - the membrane proton channel. CF(1) has five subunits: alpha(3), beta(3), gamma(1), delta(1), epsilon(1). CF(0) has three main subunits: a(1), b(2) and c(9-12). The alpha and beta chains form an alternating ring which encloses part of the gamma chain. CF(1) is attached to CF(0) by a central stalk formed by the gamma and epsilon chains, while a peripheral stalk is formed by the delta and b chains.

The protein localises to the cell membrane. It carries out the reaction ATP + H2O + 4 H(+)(in) = ADP + phosphate + 5 H(+)(out). Functionally, produces ATP from ADP in the presence of a proton gradient across the membrane. The catalytic sites are hosted primarily by the beta subunits. The chain is ATP synthase subunit beta from Streptococcus mutans serotype c (strain ATCC 700610 / UA159).